We begin with the raw amino-acid sequence, 331 residues long: tRNA U34 carboxymethyltransferase (331 aa).

Carboxy-S-adenosyl-L-methionine is bound by residues lysine 91, tryptophan 105, lysine 110, glycine 130, 152 to 154, 181 to 182, methionine 196, tyrosine 200, and arginine 315; these read DPS and IE.

It belongs to the class I-like SAM-binding methyltransferase superfamily. CmoB family. As to quaternary structure, homotetramer.

It carries out the reaction carboxy-S-adenosyl-L-methionine + 5-hydroxyuridine(34) in tRNA = 5-carboxymethoxyuridine(34) in tRNA + S-adenosyl-L-homocysteine + H(+). Catalyzes carboxymethyl transfer from carboxy-S-adenosyl-L-methionine (Cx-SAM) to 5-hydroxyuridine (ho5U) to form 5-carboxymethoxyuridine (cmo5U) at position 34 in tRNAs. This is tRNA U34 carboxymethyltransferase from Shewanella baltica (strain OS185).